We begin with the raw amino-acid sequence, 834 residues long: Probable glucan 1,3-beta-glucosidase D (834 aa).

Over residues 1 to 33 (MPSHSRSRDRYGGRDSDREARYDYDYARRRYAT) the composition is skewed to basic and acidic residues. 2 disordered regions span residues 1–188 (MPSH…ASHL) and 200–251 (QYEK…TKAR). Residues 1-306 (MPSHSRSRDR…GGRPFWKRKK (306 aa)) lie on the Cytoplasmic side of the membrane. Residues 34–45 (DDNDDDYDDDEL) are compositionally biased toward acidic residues. Basic and acidic residues-rich tracts occupy residues 46–76 (EHGL…RDAE), 98–173 (YGHD…ETAA), 201–218 (YEKE…AAKA), and 228–245 (VVGE…ESHR). The chain crosses the membrane as a helical; Signal-anchor for type II membrane protein span at residues 307 to 327 (WIGLGALILILVIVIPVAVVV). The Extracellular segment spans residues 328-834 (SKKHDNKSDP…PDFGNLPEYY (507 aa)). Positions 331-354 (HDNKSDPADPQGTSPGKSNLDGLS) are disordered. N-linked (GlcNAc...) asparagine glycosylation is found at asparagine 333, asparagine 379, asparagine 384, asparagine 396, asparagine 549, asparagine 561, and asparagine 570. The active-site Proton donor is glutamate 600. Asparagine 639, asparagine 672, and asparagine 692 each carry an N-linked (GlcNAc...) asparagine glycan. Glutamate 705 acts as the Nucleophile in catalysis.

The protein belongs to the glycosyl hydrolase 5 (cellulase A) family.

The protein localises to the cell membrane. The catalysed reaction is Successive hydrolysis of beta-D-glucose units from the non-reducing ends of (1-&gt;3)-beta-D-glucans, releasing alpha-glucose.. In terms of biological role, glucosidase involved in the degradation of cellulosic biomass. Active on lichenan. This Neosartorya fischeri (strain ATCC 1020 / DSM 3700 / CBS 544.65 / FGSC A1164 / JCM 1740 / NRRL 181 / WB 181) (Aspergillus fischerianus) protein is Probable glucan 1,3-beta-glucosidase D (exgD).